The chain runs to 565 residues: NAD-dependent malic enzyme (565 aa).

Catalysis depends on tyrosine 104, which acts as the Proton donor. Residue arginine 157 participates in NAD(+) binding. The active-site Proton acceptor is lysine 175. A divalent metal cation contacts are provided by glutamate 246, aspartate 247, and aspartate 270. NAD(+) contacts are provided by aspartate 270 and asparagine 418.

It belongs to the malic enzymes family. As to quaternary structure, homotetramer. Mg(2+) is required as a cofactor. Requires Mn(2+) as cofactor.

The catalysed reaction is (S)-malate + NAD(+) = pyruvate + CO2 + NADH. It carries out the reaction oxaloacetate + H(+) = pyruvate + CO2. The chain is NAD-dependent malic enzyme from Sodalis glossinidius (strain morsitans).